Reading from the N-terminus, the 273-residue chain is Dermonecrotic toxin LdSicTox-alphaIB1bii (273 aa).

Residue H5 is part of the active site. 2 residues coordinate Mg(2+): E25 and D27. H41 (nucleophile) is an active-site residue. Cystine bridges form between C45–C51 and C47–C190. D85 serves as a coordination point for Mg(2+). N250 carries N-linked (GlcNAc...) asparagine glycosylation.

The protein belongs to the arthropod phospholipase D family. Class II subfamily. It depends on Mg(2+) as a cofactor. In terms of tissue distribution, expressed by the venom gland.

It localises to the secreted. The catalysed reaction is an N-(acyl)-sphingosylphosphocholine = an N-(acyl)-sphingosyl-1,3-cyclic phosphate + choline. It carries out the reaction an N-(acyl)-sphingosylphosphoethanolamine = an N-(acyl)-sphingosyl-1,3-cyclic phosphate + ethanolamine. It catalyses the reaction a 1-acyl-sn-glycero-3-phosphocholine = a 1-acyl-sn-glycero-2,3-cyclic phosphate + choline. The enzyme catalyses a 1-acyl-sn-glycero-3-phosphoethanolamine = a 1-acyl-sn-glycero-2,3-cyclic phosphate + ethanolamine. Its function is as follows. Dermonecrotic toxins cleave the phosphodiester linkage between the phosphate and headgroup of certain phospholipids (sphingolipid and lysolipid substrates), forming an alcohol (often choline) and a cyclic phosphate. This toxin acts on sphingomyelin (SM). It may also act on ceramide phosphoethanolamine (CPE), lysophosphatidylcholine (LPC) and lysophosphatidylethanolamine (LPE), but not on lysophosphatidylserine (LPS), and lysophosphatidylglycerol (LPG). It acts by transphosphatidylation, releasing exclusively cyclic phosphate products as second products. Induces dermonecrosis, hemolysis, increased vascular permeability, edema, inflammatory response, and platelet aggregation. This is Dermonecrotic toxin LdSicTox-alphaIB1bii from Loxosceles deserta (Desert recluse spider).